The primary structure comprises 155 residues: Small ribosomal subunit protein uS7c (155 aa).

It belongs to the universal ribosomal protein uS7 family. As to quaternary structure, part of the 30S ribosomal subunit.

The protein localises to the plastid. Its subcellular location is the chloroplast. In terms of biological role, one of the primary rRNA binding proteins, it binds directly to 16S rRNA where it nucleates assembly of the head domain of the 30S subunit. The polypeptide is Small ribosomal subunit protein uS7c (rps7) (Hydrastis canadensis (Goldenseal)).